We begin with the raw amino-acid sequence, 289 residues long: Phosphatidylserine decarboxylase proenzyme (289 aa).

Residues Asp-92, His-149, and Ser-254 each act as charge relay system; for autoendoproteolytic cleavage activity in the active site. Ser-254 serves as the catalytic Schiff-base intermediate with substrate; via pyruvic acid; for decarboxylase activity. Ser-254 is subject to Pyruvic acid (Ser); by autocatalysis.

It belongs to the phosphatidylserine decarboxylase family. PSD-B subfamily. Prokaryotic type I sub-subfamily. As to quaternary structure, heterodimer of a large membrane-associated beta subunit and a small pyruvoyl-containing alpha subunit. Pyruvate serves as cofactor. Post-translationally, is synthesized initially as an inactive proenzyme. Formation of the active enzyme involves a self-maturation process in which the active site pyruvoyl group is generated from an internal serine residue via an autocatalytic post-translational modification. Two non-identical subunits are generated from the proenzyme in this reaction, and the pyruvate is formed at the N-terminus of the alpha chain, which is derived from the carboxyl end of the proenzyme. The autoendoproteolytic cleavage occurs by a canonical serine protease mechanism, in which the side chain hydroxyl group of the serine supplies its oxygen atom to form the C-terminus of the beta chain, while the remainder of the serine residue undergoes an oxidative deamination to produce ammonia and the pyruvoyl prosthetic group on the alpha chain. During this reaction, the Ser that is part of the protease active site of the proenzyme becomes the pyruvoyl prosthetic group, which constitutes an essential element of the active site of the mature decarboxylase.

The protein localises to the cell membrane. The catalysed reaction is a 1,2-diacyl-sn-glycero-3-phospho-L-serine + H(+) = a 1,2-diacyl-sn-glycero-3-phosphoethanolamine + CO2. The protein operates within phospholipid metabolism; phosphatidylethanolamine biosynthesis; phosphatidylethanolamine from CDP-diacylglycerol: step 2/2. Catalyzes the formation of phosphatidylethanolamine (PtdEtn) from phosphatidylserine (PtdSer). The polypeptide is Phosphatidylserine decarboxylase proenzyme (Pseudomonas paraeruginosa (strain DSM 24068 / PA7) (Pseudomonas aeruginosa (strain PA7))).